We begin with the raw amino-acid sequence, 122 residues long: MTESNRSLDDLSPARVTTAFDLPGHTTVRSLGVAQGIVVRSRSIVGSFGASLQTIFGGNITLYTSLCEKAREQAFDKMLAEACKLGANAIVAMRYDSTEIGSGVTEVICYGTAVQVAHAAGA.

The protein belongs to the UPF0145 family.

This Burkholderia cenocepacia (strain ATCC BAA-245 / DSM 16553 / LMG 16656 / NCTC 13227 / J2315 / CF5610) (Burkholderia cepacia (strain J2315)) protein is UPF0145 protein BceJ2315_57450.